A 555-amino-acid chain; its full sequence is Formate--tetrahydrofolate ligase (555 aa).

Residue 65–72 (TPAGEGKS) coordinates ATP.

This sequence belongs to the formate--tetrahydrofolate ligase family.

It catalyses the reaction (6S)-5,6,7,8-tetrahydrofolate + formate + ATP = (6R)-10-formyltetrahydrofolate + ADP + phosphate. It functions in the pathway one-carbon metabolism; tetrahydrofolate interconversion. The sequence is that of Formate--tetrahydrofolate ligase from Staphylococcus carnosus (strain TM300).